A 563-amino-acid chain; its full sequence is Proton channel OTOP2 (563 aa).

The tract at residues 1–20 is disordered; the sequence is MSEELVPHPNESLPGPRASP. Transmembrane regions (helical) follow at residues 30-50, 62-82, 100-120, 137-157, 173-193, 242-262, 290-310, 325-345, 373-393, 403-423, 496-516, and 528-548; these read LLSV…ISGG, VFAL…FYLL, PIWL…MDVF, ILHP…LWIS, LMFT…DESV, FYLY…LYVM, FFAG…VFIL, ALVI…LVSL, LMGA…AVVV, LNLS…VFII, DISL…AFGA, and FYGY…GIFY.

Belongs to the otopetrin family. Expressed at higher level in stomach, testis and olfactory bulb.

Its subcellular location is the cell membrane. It catalyses the reaction H(+)(in) = H(+)(out). Its activity is regulated as follows. Actives at neutral and alkaline extracellular pH, acid extracellular pH appears to inhibit the channel. Insensitive to activation by Zn(2+). Proton-selective ion channel open at neutral pH. Actives at neutral and alkaline extracellular pH, likely participates in some alkali-related physiological activities. The polypeptide is Proton channel OTOP2 (Mus musculus (Mouse)).